Here is a 47-residue protein sequence, read N- to C-terminus: Large ribosomal subunit protein bL33A (47 aa).

This sequence belongs to the bacterial ribosomal protein bL33 family.

This chain is Large ribosomal subunit protein bL33A, found in Staphylococcus aureus (strain JH1).